A 250-amino-acid chain; its full sequence is UPF0494 membrane protein PB2B2.07c (250 aa).

3 helical membrane passes run 98–118, 144–164, and 179–199; these read WPLL…NFEV, IAIY…MFPL, and MIIA…GATI.

It belongs to the UPF0494 family.

The protein resides in the cytoplasm. It is found in the endoplasmic reticulum. It localises to the golgi apparatus. The protein localises to the membrane. This chain is UPF0494 membrane protein PB2B2.07c, found in Schizosaccharomyces pombe (strain 972 / ATCC 24843) (Fission yeast).